The sequence spans 101 residues: Putative septation protein SpoVG (101 aa).

It belongs to the SpoVG family.

Could be involved in septation. This Staphylococcus saprophyticus subsp. saprophyticus (strain ATCC 15305 / DSM 20229 / NCIMB 8711 / NCTC 7292 / S-41) protein is Putative septation protein SpoVG.